The sequence spans 470 residues: Amino-acid permease RocC (470 aa).

12 consecutive transmembrane segments (helical) span residues 18 to 38, 44 to 64, 90 to 110, 119 to 139, 159 to 179, 196 to 216, 243 to 263, 281 to 301, 338 to 358, 360 to 380, 409 to 429, and 433 to 453; these read FMIA…GFTI, LGAI…MLCL, GFMI…LELT, WLPS…IFLI, VAAI…LIDF, GLFP…NFSF, VIWR…AILP, IGIP…ILSV, ALLI…MAAE, VYLW…MSIC, LVPI…IFIP, and IGLY…HLSI.

It belongs to the amino acid-polyamine-organocation (APC) superfamily.

Its subcellular location is the cell membrane. In terms of biological role, putative transport protein involved in arginine degradative pathway. Probably transports arginine or ornithine. This Bacillus subtilis (strain 168) protein is Amino-acid permease RocC (rocC).